A 156-amino-acid polypeptide reads, in one-letter code: Endogenous retrovirus group K member 8 Pro protein (156 aa).

Residues 21–96 enclose the Peptidase A2 domain; it reads FEGLVDTGAD…IPLNLWGRDL (76 aa). Aspartate 26 is a catalytic residue. The region spanning 111 to 156 is the G-patch domain; sequence YSPTSQKIMTKRGYIPGKGLGKNEDGIKIPFEAKINQKREGIGYPF.

It belongs to the peptidase A2 family. HERV class-II K(HML-2) subfamily. Active as a homodimer. In terms of processing, autoproteolytically processed at the N-terminus. Expected C-terminal autoprocessing not detected. The sequence shown is that of the processed Pro protein.

It carries out the reaction Processing at the authentic HIV-1 PR recognition site and release of the mature p17 matrix and the p24 capsid protein, as a result of the cleavage of the -SQNY-|-PIVQ- cleavage site.. Retroviral proteases have roles in the processing of the primary translation products and the maturation of the viral particle. Endogenous Pro proteins may have kept, lost or modified their original function during evolution. The protein is Endogenous retrovirus group K member 8 Pro protein (ERVK-8) of Homo sapiens (Human).